Reading from the N-terminus, the 80-residue chain is Exodeoxyribonuclease 7 small subunit (80 aa).

Belongs to the XseB family. Heterooligomer composed of large and small subunits.

It localises to the cytoplasm. It catalyses the reaction Exonucleolytic cleavage in either 5'- to 3'- or 3'- to 5'-direction to yield nucleoside 5'-phosphates.. In terms of biological role, bidirectionally degrades single-stranded DNA into large acid-insoluble oligonucleotides, which are then degraded further into small acid-soluble oligonucleotides. This chain is Exodeoxyribonuclease 7 small subunit, found in Rickettsia typhi (strain ATCC VR-144 / Wilmington).